The following is a 108-amino-acid chain: Protein S100-A15A (108 aa).

The 36-residue stretch at 53 to 88 folds into the EF-hand domain; the sequence is KEPYYITELFQAADKNKDNQICFDEFLYILGKLVKD. Ca(2+) contacts are provided by D66, N68, D70, Q72, and E77.

It belongs to the S-100 family.

The protein is Protein S100-A15A (S100A15A) of Pongo abelii (Sumatran orangutan).